A 493-amino-acid chain; its full sequence is Glutamate--tRNA ligase (493 aa).

The 'HIGH' region motif lies at 10 to 20 (PSPTGDPHVGT). Residues C107, C109, C134, and H136 each contribute to the Zn(2+) site. The 'KMSKS' region signature appears at 251–255 (KLSKR). Residue K254 coordinates ATP.

This sequence belongs to the class-I aminoacyl-tRNA synthetase family. Glutamate--tRNA ligase type 1 subfamily. In terms of assembly, monomer. The cofactor is Zn(2+).

It is found in the cytoplasm. The catalysed reaction is tRNA(Glu) + L-glutamate + ATP = L-glutamyl-tRNA(Glu) + AMP + diphosphate. Functionally, catalyzes the attachment of glutamate to tRNA(Glu) in a two-step reaction: glutamate is first activated by ATP to form Glu-AMP and then transferred to the acceptor end of tRNA(Glu). This chain is Glutamate--tRNA ligase, found in Stutzerimonas stutzeri (strain A1501) (Pseudomonas stutzeri).